Consider the following 505-residue polypeptide: uncharacterized protein (505 aa).

Positions 1–19 (MILFTAIILVASVVHVVVS) are cleaved as a signal peptide. Residues 20–483 (SPQQCYYCVE…EQPNSAPRGE (464 aa)) are Extracellular-facing. Residues 484–504 (IHQLFRCTFVAVFIVFACFIV) traverse the membrane as a helical segment. Cys505 is a topological domain (cytoplasmic).

As to expression, component of the acid-insoluble and acid-soluble organic matrix of the aragonitic skeleton (at protein level).

The protein resides in the membrane. This is an uncharacterized protein from Acropora millepora (Staghorn coral).